A 419-amino-acid chain; its full sequence is BTB/POZ domain-containing protein KCTD20 (419 aa).

The 75-residue stretch at 117-191 (EKVTLLVDGT…YKTGIINCPD (75 aa)) folds into the BTB domain.

As to quaternary structure, interacts with AKT1; AKT2 and AKT3. Interacts with PPP2CA and PPP1CA. Part of a complex containing MARK4. Ubiquitously expressed.

Its subcellular location is the cytoplasm. Promotes the phosphorylation of AKT family members. The sequence is that of BTB/POZ domain-containing protein KCTD20 (Kctd20) from Mus musculus (Mouse).